Consider the following 255-residue polypeptide: Protein DAL82 (255 aa).

The interval Pro87–Thr149 is disordered. Positions Pro128–Ser138 are enriched in basic and acidic residues.

Its function is as follows. Positive regulator of allophanate-induced genes in S.cerevisiae. This chain is Protein DAL82 (DAL82), found in Saccharomyces cerevisiae (strain ATCC 204508 / S288c) (Baker's yeast).